We begin with the raw amino-acid sequence, 264 residues long: Meiotic recombination protein REC102 (264 aa).

The segment at 200 to 221 (LKWQQSSLAPISYALTSNSVLL) is leucine-zipper.

This sequence belongs to the TOP6B-like family. Interacts with REC104; seems to form a functional unit with REC104. REC102-REC104 interacts with SKI8-SPO11 and this interaction is required for proper subcellular location of the proteins during the initiation of recombination. Interacts with MEI4, REC114 and SPO11.

Its subcellular location is the nucleus. Its function is as follows. Required for formation of the SPO11-mediated double-strand breaks (DSBs) that initiate meiotic recombination. May mediate the interaction between SPO11 subunits during meiosis. Also needed for homolog chromosome pairing, synaptonemal complex formation, and for the proper timing of the first meiotic division. Not required for mitosis and mitotic DNA repair mechanisms. The polypeptide is Meiotic recombination protein REC102 (REC102) (Saccharomyces cerevisiae (strain RM11-1a) (Baker's yeast)).